A 124-amino-acid chain; its full sequence is Small ribosomal subunit protein uS12 (124 aa).

Residues 1 to 22 form a disordered region; sequence MATVNQLVRKPRKRKVAKSDVP. 3-methylthioaspartic acid is present on Asp-89. The disordered stretch occupies residues 99-124; it reads RGSLDTSGVQNRKQGRSKYGTKRPKK. Residues 111–124 show a composition bias toward basic residues; it reads KQGRSKYGTKRPKK.

The protein belongs to the universal ribosomal protein uS12 family. Part of the 30S ribosomal subunit. Contacts proteins S8 and S17. May interact with IF1 in the 30S initiation complex.

In terms of biological role, with S4 and S5 plays an important role in translational accuracy. Interacts with and stabilizes bases of the 16S rRNA that are involved in tRNA selection in the A site and with the mRNA backbone. Located at the interface of the 30S and 50S subunits, it traverses the body of the 30S subunit contacting proteins on the other side and probably holding the rRNA structure together. The combined cluster of proteins S8, S12 and S17 appears to hold together the shoulder and platform of the 30S subunit. This chain is Small ribosomal subunit protein uS12, found in Marinomonas sp. (strain MWYL1).